The sequence spans 137 residues: ATP synthase epsilon chain (137 aa).

Belongs to the ATPase epsilon chain family. In terms of assembly, F-type ATPases have 2 components, CF(1) - the catalytic core - and CF(0) - the membrane proton channel. CF(1) has five subunits: alpha(3), beta(3), gamma(1), delta(1), epsilon(1). CF(0) has three main subunits: a, b and c.

The protein resides in the cellular thylakoid membrane. Its function is as follows. Produces ATP from ADP in the presence of a proton gradient across the membrane. The sequence is that of ATP synthase epsilon chain from Synechococcus sp. (strain JA-2-3B'a(2-13)) (Cyanobacteria bacterium Yellowstone B-Prime).